A 73-amino-acid chain; its full sequence is Protein SlyX homolog (73 aa).

Belongs to the SlyX family.

The polypeptide is Protein SlyX homolog (Histophilus somni (strain 2336) (Haemophilus somnus)).